A 735-amino-acid polypeptide reads, in one-letter code: Probable pre-mRNA-splicing factor ATP-dependent RNA helicase prp43 (735 aa).

Residues 1–12 (MEPAQKKLRQES) show a composition bias toward basic and acidic residues. The segment at 1 to 34 (MEPAQKKLRQESKNPYLAHLNNGDDSEEVVSSKG) is disordered. A Helicase ATP-binding domain is found at 85–250 (LKIYHENQII…FFDAPLLAVP (166 aa)). 98–105 (GETGSGKT) provides a ligand contact to ATP. The short motif at 197–200 (DEAH) is the DEAH box element. A Helicase C-terminal domain is found at 275–455 (TVLQIHVEEG…STVLELKKLG (181 aa)).

The protein belongs to the DEAD box helicase family. DEAH subfamily. DDX15/PRP43 sub-subfamily.

The protein localises to the nucleus. The enzyme catalyses ATP + H2O = ADP + phosphate + H(+). In terms of biological role, pre-mRNA processing factor involved in disassembly of spliceosomes after the release of mature mRNA. The protein is Probable pre-mRNA-splicing factor ATP-dependent RNA helicase prp43 (prp43) of Schizosaccharomyces pombe (strain 972 / ATCC 24843) (Fission yeast).